A 492-amino-acid polypeptide reads, in one-letter code: Bifunctional purine biosynthesis protein PurH (492 aa).

One can recognise an MGS-like domain in the interval methionine 1–valine 144.

It belongs to the PurH family.

It carries out the reaction (6R)-10-formyltetrahydrofolate + 5-amino-1-(5-phospho-beta-D-ribosyl)imidazole-4-carboxamide = 5-formamido-1-(5-phospho-D-ribosyl)imidazole-4-carboxamide + (6S)-5,6,7,8-tetrahydrofolate. The enzyme catalyses IMP + H2O = 5-formamido-1-(5-phospho-D-ribosyl)imidazole-4-carboxamide. It functions in the pathway purine metabolism; IMP biosynthesis via de novo pathway; 5-formamido-1-(5-phospho-D-ribosyl)imidazole-4-carboxamide from 5-amino-1-(5-phospho-D-ribosyl)imidazole-4-carboxamide (10-formyl THF route): step 1/1. The protein operates within purine metabolism; IMP biosynthesis via de novo pathway; IMP from 5-formamido-1-(5-phospho-D-ribosyl)imidazole-4-carboxamide: step 1/1. This Staphylococcus aureus (strain bovine RF122 / ET3-1) protein is Bifunctional purine biosynthesis protein PurH.